Here is a 214-residue protein sequence, read N- to C-terminus: Orotate phosphoribosyltransferase (214 aa).

K26 contributes to the 5-phospho-alpha-D-ribose 1-diphosphate binding site. An orotate-binding site is contributed by 34-35; sequence FF. Residues 72-73, R98, K99, K102, H104, and 123-131 contribute to the 5-phospho-alpha-D-ribose 1-diphosphate site; these read YK and DDVISAGTS. Orotate-binding residues include S127 and R155.

It belongs to the purine/pyrimidine phosphoribosyltransferase family. PyrE subfamily. As to quaternary structure, homodimer. The cofactor is Mg(2+).

It catalyses the reaction orotidine 5'-phosphate + diphosphate = orotate + 5-phospho-alpha-D-ribose 1-diphosphate. It participates in pyrimidine metabolism; UMP biosynthesis via de novo pathway; UMP from orotate: step 1/2. Its function is as follows. Catalyzes the transfer of a ribosyl phosphate group from 5-phosphoribose 1-diphosphate to orotate, leading to the formation of orotidine monophosphate (OMP). This is Orotate phosphoribosyltransferase from Chromobacterium violaceum (strain ATCC 12472 / DSM 30191 / JCM 1249 / CCUG 213 / NBRC 12614 / NCIMB 9131 / NCTC 9757 / MK).